A 52-amino-acid chain; its full sequence is Teratocyte protein CftICK-I (52 aa).

Positions 1 to 19 are cleaved as a signal peptide; it reads MYKLCILFLVVIFAVMAIA. 3 cysteine pairs are disulfide-bonded: Cys-22-Cys-37, Cys-29-Cys-41, and Cys-36-Cys-51.

As to expression, abundantly expressed by teratocytes, which are extra-embryonic cells released by parasitoid wasps into their hosts during larval eclosion.

Its subcellular location is the secreted. Its function is as follows. This endoparasitoid wasp peptide has immununosuppressive, antimicrobial and insecticidal activities. Suppress cellular immunity which is detectable as a reduction of hemocyte encapsulation in the host. Shows potent antifungal activity against C.albicans (MIC~0.25 ug/ml). In vivo, ingestion of this peptide (probably at excessive doses) increases larval mortality and reduces leaf consumption of D.saccharalis, a permissive host for C.flavipes. The chain is Teratocyte protein CftICK-I from Cotesia flavipes (Parasitic wasp).